The chain runs to 456 residues: Transcription factor tau subunit sfc1 (456 aa).

Disordered stretches follow at residues 394–416 (DRYSNFDEQDNTDLNDTVRGLNT) and 437–456 (HEGFEDLEEIDDDYDDIFGD). Polar residues predominate over residues 407 to 416 (LNDTVRGLNT). Residues 441 to 456 (EDLEEIDDDYDDIFGD) show a composition bias toward acidic residues.

Component of the TFIIIC complex including sfc1, sfc3, sfc4, sfc6 and sfc7. The subunits are organized in two globular domains, tauA and tauB, connected by a proteolysis-sensitive and flexible linker. Interacts with sfc3, sfc4 and sfc6. Phosphorylated.

The protein resides in the nucleus. TFIIIC mediates tRNA and 5S RNA gene activation by binding to intragenic promoter elements. Upstream of the transcription start site, TFIIIC assembles the initiation complex TFIIIB-TFIIIC-tDNA, which is sufficient for RNA polymerase III recruitment and function. Part of the tauA domain of TFIIIC that binds boxA DNA promoter sites of tRNA and similar genes. Participates in the interconnection of tauA with tauB via its contacts with sfc3 and sfc6. Serves as a scaffold critical for tauA-DNA spatial configuration and tauB-DNA stability. Localizes to chromatin insulator sequence without recruiting RNA polymerase III and plays a role in nuclear organization. The protein is Transcription factor tau subunit sfc1 (sfc1) of Schizosaccharomyces pombe (strain 972 / ATCC 24843) (Fission yeast).